A 578-amino-acid polypeptide reads, in one-letter code: 2-hydroxyacyl-CoA lyase 1 (578 aa).

Ser4 bears the Phosphoserine mark. Thiamine diphosphate is bound at residue Glu60. N6-succinyllysine occurs at positions 351, 358, and 365. The segment at 401–486 is thiamine pyrophosphate binding; it reads TMDIGRTVLQ…LLVVNNNGIY (86 aa). Asp455 and Asn482 together coordinate Mg(2+). Positions 576–578 match the Microbody targeting signal motif; the sequence is SNM.

Belongs to the TPP enzyme family. Homotetramer. Mg(2+) serves as cofactor. It depends on thiamine diphosphate as a cofactor. As to expression, widely expressed.

The protein localises to the peroxisome. The enzyme catalyses a 2-hydroxy-3-methyl fatty acyl-CoA = a 2-methyl-branched fatty aldehyde + formyl-CoA. It carries out the reaction an (R)-2-hydroxy-long-chain-fatty acyl-CoA = a long-chain fatty aldehyde + formyl-CoA. The catalysed reaction is 2-hydroxy-3-methylhexadecanoyl-CoA = 2-methylpentadecanal + formyl-CoA. It catalyses the reaction 2-hydroxyoctadecanoyl-CoA = heptadecanal + formyl-CoA. The enzyme catalyses 2-hydroxyphytanoyl-CoA = 2,6,10,14-tetramethylpentadecanal + formyl-CoA. Its pathway is lipid metabolism; fatty acid metabolism. Functionally, peroxisomal 2-OH acyl-CoA lyase involved in the cleavage (C1 removal) reaction in the fatty acid alpha-oxydation in a thiamine pyrophosphate (TPP)-dependent manner. Involved in the degradation of 3-methyl-branched fatty acids like phytanic acid and the shortening of 2-hydroxy long-chain fatty acids. Plays a significant role in the biosynthesis of heptadecanal in the liver. This is 2-hydroxyacyl-CoA lyase 1 from Homo sapiens (Human).